The chain runs to 237 residues: Tyrosine-protein kinase YwqD (237 aa).

Position 228 is a phosphotyrosine; by autocatalysis (Y228).

This sequence belongs to the CpsD/CapB family. In terms of processing, autophosphorylated in vitro, which inhibits ATPase activity. Dephosphorylated by YwqE in vitro.

It carries out the reaction L-tyrosyl-[protein] + ATP = O-phospho-L-tyrosyl-[protein] + ADP + H(+). Its function is as follows. May be involved in the regulation of capsular polysaccharide biosynthesis. Autophosphorylates in vitro. Phosphorylates and activates in vitro two UDP-glucose dehydrogenases, YwqF and TuaD, as well as the DNA-binding proteins Ssb and SsbB. In Bacillus subtilis (strain 168), this protein is Tyrosine-protein kinase YwqD (ywqD).